Reading from the N-terminus, the 585-residue chain is ATP-dependent lipid A-core flippase (585 aa).

The next 5 membrane-spanning stretches (helical) occupy residues 24–44, 65–85, 143–163, 165–185, and 253–273; these read LWKV…ASAA, LLVP…SFCG, ITVV…MIYV, WKLT…IGYV, and PIIQ…ALSP. Residues 29–310 form the ABC transmembrane type-1 domain; it reads ALAVLGNVIY…LTEVNAVIQR (282 aa). Positions 342 to 578 constitute an ABC transporter domain; it reads LEFKSLGFAY…DGAYAALHKL (237 aa). Residue 376–383 coordinates ATP; it reads GRSGSGKS.

This sequence belongs to the ABC transporter superfamily. Lipid exporter (TC 3.A.1.106) family. Homodimer.

The protein resides in the cell inner membrane. It carries out the reaction ATP + H2O + lipid A-core oligosaccharideSide 1 = ADP + phosphate + lipid A-core oligosaccharideSide 2.. Its function is as follows. Involved in lipopolysaccharide (LPS) biosynthesis. Translocates lipid A-core from the inner to the outer leaflet of the inner membrane. Transmembrane domains (TMD) form a pore in the inner membrane and the ATP-binding domain (NBD) is responsible for energy generation. The protein is ATP-dependent lipid A-core flippase of Hahella chejuensis (strain KCTC 2396).